A 288-amino-acid polypeptide reads, in one-letter code: Ninja-family protein 6 (288 aa).

2 disordered regions span residues 1 to 50 (MASR…KRPR) and 66 to 207 (LHAD…TRTG). A compositionally biased stretch (gly residues) spans 12-23 (AGEGAGPPGDAG). Residues 76–86 (LPLLRTTSLPT) show a composition bias toward low complexity. Residues 91-103 (ERWRRREMQSRRR) are compositionally biased toward basic and acidic residues. Over residues 131–173 (RRSNASQGSNSASTTEQGIGGSMFNQSADAKSPSTSDNRNQND) the composition is skewed to polar residues. The segment covering 195-207 (RLRTLGSLTTRTG) has biased composition (low complexity).

The protein belongs to the Ninja family.

Its subcellular location is the nucleus. The sequence is that of Ninja-family protein 6 from Zea mays (Maize).